Here is a 376-residue protein sequence, read N- to C-terminus: 4-hydroxy-3-methylbut-2-en-1-yl diphosphate synthase (flavodoxin) (376 aa).

Residues Cys-272, Cys-275, Cys-307, and Glu-314 each contribute to the [4Fe-4S] cluster site.

This sequence belongs to the IspG family. Requires [4Fe-4S] cluster as cofactor.

It carries out the reaction (2E)-4-hydroxy-3-methylbut-2-enyl diphosphate + oxidized [flavodoxin] + H2O + 2 H(+) = 2-C-methyl-D-erythritol 2,4-cyclic diphosphate + reduced [flavodoxin]. It participates in isoprenoid biosynthesis; isopentenyl diphosphate biosynthesis via DXP pathway; isopentenyl diphosphate from 1-deoxy-D-xylulose 5-phosphate: step 5/6. Functionally, converts 2C-methyl-D-erythritol 2,4-cyclodiphosphate (ME-2,4cPP) into 1-hydroxy-2-methyl-2-(E)-butenyl 4-diphosphate. The polypeptide is 4-hydroxy-3-methylbut-2-en-1-yl diphosphate synthase (flavodoxin) (Blochmanniella pennsylvanica (strain BPEN)).